Consider the following 872-residue polypeptide: Exoglucanase A (872 aa).

The signal sequence occupies residues 1–40 (MSTLGKRAGVRRRVRAVATAATATALVAVPLTTLATSASA). The interval 41–477 (APVHVDNPYA…PVIGGTTPVE (437 aa)) is catalytic. 2 cysteine pairs are disulfide-bonded: Cys140–Cys202 and Cys374–Cys428. Asp188 (proton donor) is an active-site residue. Asp410 functions as the Nucleophile in the catalytic mechanism. 3 consecutive Fibronectin type-III domains span residues 484–569 (VPTG…TQSG), 579–667 (VPAG…TQTG), and 677–765 (VPTG…TQAA). One can recognise a CBM2 domain in the interval 763 to 872 (QAATSGGCTV…TLNGVACTLG (110 aa)). Cys770 and Cys869 form a disulfide bridge.

The protein belongs to the glycosyl hydrolase 6 (cellulase B) family.

The enzyme catalyses Hydrolysis of (1-&gt;4)-beta-D-glucosidic linkages in cellulose and cellotetraose, releasing cellobiose from the non-reducing ends of the chains.. In terms of biological role, this enzyme hydrolyzes 1,4-beta-D-glucosidic linkages of cellulose. Weak activity against carboxymethylcellulose, bacterial microcrystalline cellulose and barley beta-glucan. Also has weak endoglucanase activity. Hydrolyzes glucosidic bonds with inversion of anomeric configuration. The chain is Exoglucanase A (cbhA) from Cellulomonas fimi (strain ATCC 484 / DSM 20113 / JCM 1341 / CCUG 24087 / LMG 16345 / NBRC 15513 / NCIMB 8980 / NCTC 7547 / NRS-133).